The chain runs to 201 residues: Akirin-2 (201 aa).

Residues Ser-18 and Ser-21 each carry the phosphoserine modification. The Nuclear localization signal motif lies at 23 to 28 (KRRRCA). The residue at position 55 (Ser-55) is a Phosphoserine. The SYVS motif signature appears at 198–201 (SYVS).

This sequence belongs to the akirin family. In terms of assembly, homodimer. Interacts with IPO9; the interaction is direct. Associates with 20S and 26S proteasomes. Interacts with SMARCD1; promoting SWI/SNF complex recruitment. Interacts with NFKBIZ. Interacts with YWHAB. In terms of processing, polyubiquitinated. Polyubiquitination is dependent of UBR5 that extends pre-ubiquitinated AKIRIN2.

The protein resides in the nucleus. It is found in the cytoplasm. It localises to the membrane. Its function is as follows. Molecular adapter that acts as a bridge between a variety of multiprotein complexes, and which is involved in embryonic development, immunity, myogenesis and brain development. Plays a key role in nuclear protein degradation by promoting import of proteasomes into the nucleus: directly binds to fully assembled 20S proteasomes at one end and to nuclear import receptor IPO9 at the other end, bridging them together and mediating the import of pre-assembled proteasome complexes through the nuclear pore. Involved in innate immunity by regulating the production of interleukin-6 (IL6) downstream of Toll-like receptor (TLR): acts by bridging the NF-kappa-B inhibitor NFKBIZ and the SWI/SNF complex, leading to promote induction of IL6. Also involved in adaptive immunity by promoting B-cell activation. Involved in brain development: required for the survival and proliferation of cerebral cortical progenitor cells. Involved in myogenesis: required for skeletal muscle formation and skeletal development, possibly by regulating expression of muscle differentiation factors. Also plays a role in facilitating interdigital tissue regression during limb development. In Mus musculus (Mouse), this protein is Akirin-2.